A 106-amino-acid chain; its full sequence is MRGGGNMQQMMKQMQKMQKKMAEEQEKLKEERIEGTAGGGMVTVVVSGHKEVLDVIIKEEVVDPEDIEMLQDLVLAATNDALTKADDVTAQRLGQHTKGLNIPGMM.

Residues 1-34 (MRGGGNMQQMMKQMQKMQKKMAEEQEKLKEERIE) are disordered. Positions 7–16 (MQQMMKQMQK) are enriched in low complexity. Basic and acidic residues predominate over residues 20-34 (KMAEEQEKLKEERIE).

It belongs to the YbaB/EbfC family. In terms of assembly, homodimer.

It localises to the cytoplasm. The protein localises to the nucleoid. Binds to DNA and alters its conformation. May be involved in regulation of gene expression, nucleoid organization and DNA protection. This Macrococcus caseolyticus (strain JCSC5402) (Macrococcoides caseolyticum) protein is Nucleoid-associated protein MCCL_1934.